The sequence spans 253 residues: Sulfur carrier protein FdhD (253 aa).

Catalysis depends on Cys100, which acts as the Cysteine persulfide intermediate.

This sequence belongs to the FdhD family.

The protein resides in the cytoplasm. Functionally, required for formate dehydrogenase (FDH) activity. Acts as a sulfur carrier protein that transfers sulfur from IscS to the molybdenum cofactor prior to its insertion into FDH. The protein is Sulfur carrier protein FdhD of Sulfolobus acidocaldarius (strain ATCC 33909 / DSM 639 / JCM 8929 / NBRC 15157 / NCIMB 11770).